Consider the following 391-residue polypeptide: Acetate kinase (391 aa).

A Mg(2+)-binding site is contributed by Asn4. Lys11 contacts ATP. Arg85 contacts substrate. The Proton donor/acceptor role is filled by Asp142. ATP is bound by residues 202–206 (HLGNG), 277–279 (DLR), and 325–329 (GIGEN). Glu378 is a binding site for Mg(2+).

This sequence belongs to the acetokinase family. In terms of assembly, homodimer. Mg(2+) is required as a cofactor. The cofactor is Mn(2+).

The protein resides in the cytoplasm. The enzyme catalyses acetate + ATP = acetyl phosphate + ADP. The protein operates within metabolic intermediate biosynthesis; acetyl-CoA biosynthesis; acetyl-CoA from acetate: step 1/2. In terms of biological role, catalyzes the formation of acetyl phosphate from acetate and ATP. Can also catalyze the reverse reaction. This chain is Acetate kinase, found in Halalkalibacterium halodurans (strain ATCC BAA-125 / DSM 18197 / FERM 7344 / JCM 9153 / C-125) (Bacillus halodurans).